We begin with the raw amino-acid sequence, 351 residues long: Dihydroorotate dehydrogenase (quinone) (351 aa).

Residues 67-71 (AGFDK) and Thr91 contribute to the FMN site. Lys71 provides a ligand contact to substrate. Residue 116-120 (NAMGF) participates in substrate binding. Asn145 and Asn178 together coordinate FMN. Asn178 contributes to the substrate binding site. The active-site Nucleophile is Ser181. Residue Asn183 coordinates substrate. Positions 214 and 242 each coordinate FMN. 243 to 244 (NT) lines the substrate pocket. Residues Gly262, Gly291, and 312–313 (YS) contribute to the FMN site.

Belongs to the dihydroorotate dehydrogenase family. Type 2 subfamily. As to quaternary structure, monomer. Requires FMN as cofactor.

It localises to the cell membrane. It catalyses the reaction (S)-dihydroorotate + a quinone = orotate + a quinol. The protein operates within pyrimidine metabolism; UMP biosynthesis via de novo pathway; orotate from (S)-dihydroorotate (quinone route): step 1/1. In terms of biological role, catalyzes the conversion of dihydroorotate to orotate with quinone as electron acceptor. The chain is Dihydroorotate dehydrogenase (quinone) from Helicobacter pylori (strain Shi470).